A 379-amino-acid chain; its full sequence is Protein RecA (379 aa).

79 to 86 (GPESSGKT) is a binding site for ATP.

The protein belongs to the RecA family.

The protein localises to the cytoplasm. Can catalyze the hydrolysis of ATP in the presence of single-stranded DNA, the ATP-dependent uptake of single-stranded DNA by duplex DNA, and the ATP-dependent hybridization of homologous single-stranded DNAs. It interacts with LexA causing its activation and leading to its autocatalytic cleavage. The protein is Protein RecA of Streptococcus uberis (strain ATCC BAA-854 / 0140J).